We begin with the raw amino-acid sequence, 534 residues long: Cytochrome c oxidase subunit 1 (534 aa).

A helical membrane pass occupies residues 16–36 (VLYFMLAIFSGMAGTAMSLII). Glu39, Ala42, and Gly44 together coordinate Ca(2+). 6 consecutive transmembrane segments (helical) span residues 57–77 (VLVV…ALIG), 101–121 (IAFW…LVES), 147–167 (AIFA…NFIV), 182–202 (LPLF…SLPV), 235–255 (LFYF…FGII), and 267–287 (VFGE…GFLV). His62 serves as a coordination point for Fe(II)-heme a. Residue His241 coordinates Cu cation. The segment at residues 241–245 (HPEVY) is a cross-link (1'-histidyl-3'-tyrosine (His-Tyr)). Tyr245 contacts O2. Cu cation-binding residues include His290 and His291. The next 2 membrane-spanning stretches (helical) occupy residues 310-330 (MIIA…IYGG) and 338-358 (MLYA…GVAL). His368 and Asp369 together coordinate Mg(2+). The next 2 helical transmembrane spans lie at 372 to 392 (YVVG…LFAG) and 414 to 434 (FWLI…LGIN). His376 contacts heme a3. His378 lines the Fe(II)-heme a pocket. Pro441 serves as a coordination point for Ca(2+). The chain crosses the membrane as a helical span at residues 452-472 (YVASIGSFIATLSLFLFIYIL).

It belongs to the heme-copper respiratory oxidase family. As to quaternary structure, component of the cytochrome c oxidase (complex IV, CIV), a multisubunit enzyme composed of a catalytic core of 3 subunits and several supernumerary subunits. The complex exists as a monomer or a dimer and forms supercomplexes (SCs) in the inner mitochondrial membrane with ubiquinol-cytochrome c oxidoreductase (cytochrome b-c1 complex, complex III, CIII). Heme serves as cofactor. Cu cation is required as a cofactor.

It localises to the mitochondrion inner membrane. It carries out the reaction 4 Fe(II)-[cytochrome c] + O2 + 8 H(+)(in) = 4 Fe(III)-[cytochrome c] + 2 H2O + 4 H(+)(out). The protein operates within energy metabolism; oxidative phosphorylation. Component of the cytochrome c oxidase, the last enzyme in the mitochondrial electron transport chain which drives oxidative phosphorylation. The respiratory chain contains 3 multisubunit complexes succinate dehydrogenase (complex II, CII), ubiquinol-cytochrome c oxidoreductase (cytochrome b-c1 complex, complex III, CIII) and cytochrome c oxidase (complex IV, CIV), that cooperate to transfer electrons derived from NADH and succinate to molecular oxygen, creating an electrochemical gradient over the inner membrane that drives transmembrane transport and the ATP synthase. Cytochrome c oxidase is the component of the respiratory chain that catalyzes the reduction of oxygen to water. Electrons originating from reduced cytochrome c in the intermembrane space (IMS) are transferred via the dinuclear copper A center (CU(A)) of subunit 2 and heme A of subunit 1 to the active site in subunit 1, a binuclear center (BNC) formed by heme A3 and copper B (CU(B)). The BNC reduces molecular oxygen to 2 water molecules using 4 electrons from cytochrome c in the IMS and 4 protons from the mitochondrial matrix. The protein is Cytochrome c oxidase subunit 1 (COXI) of Saccharomyces paradoxus (Yeast).